The sequence spans 69 residues: Sec-independent protein translocase protein TatA (69 aa).

The helical transmembrane segment at 1 to 21 threads the bilayer; sequence MFGLGGQELVLILLIVLLLFG. Residues 47-63 show a composition bias toward basic and acidic residues; the sequence is EEEFNKSMDDNPKKEKA. The interval 47-69 is disordered; it reads EEEFNKSMDDNPKKEKATTASKS.

This sequence belongs to the TatA/E family. As to quaternary structure, forms a complex with TatC.

Its subcellular location is the cell inner membrane. In terms of biological role, part of the twin-arginine translocation (Tat) system that transports large folded proteins containing a characteristic twin-arginine motif in their signal peptide across membranes. TatA could form the protein-conducting channel of the Tat system. The sequence is that of Sec-independent protein translocase protein TatA from Chlorobium chlorochromatii (strain CaD3).